The sequence spans 65 residues: Large ribosomal subunit protein bL31 (65 aa).

4 residues coordinate Zn(2+): Cys-16, Cys-18, Cys-36, and Cys-39.

It belongs to the bacterial ribosomal protein bL31 family. Type A subfamily. Part of the 50S ribosomal subunit. Requires Zn(2+) as cofactor.

Its function is as follows. Binds the 23S rRNA. In Desulfitobacterium hafniense (strain DSM 10664 / DCB-2), this protein is Large ribosomal subunit protein bL31.